A 101-amino-acid polypeptide reads, in one-letter code: Large ribosomal subunit protein uL24 (101 aa).

The protein belongs to the universal ribosomal protein uL24 family. Part of the 50S ribosomal subunit.

In terms of biological role, one of two assembly initiator proteins, it binds directly to the 5'-end of the 23S rRNA, where it nucleates assembly of the 50S subunit. Its function is as follows. One of the proteins that surrounds the polypeptide exit tunnel on the outside of the subunit. In Ruegeria sp. (strain TM1040) (Silicibacter sp.), this protein is Large ribosomal subunit protein uL24.